A 321-amino-acid polypeptide reads, in one-letter code: uncharacterized protein (321 aa).

This is an uncharacterized protein from Archaeoglobus fulgidus (strain ATCC 49558 / DSM 4304 / JCM 9628 / NBRC 100126 / VC-16).